Here is a 139-residue protein sequence, read N- to C-terminus: Transcription antitermination protein NusB (139 aa).

Belongs to the NusB family.

Functionally, involved in transcription antitermination. Required for transcription of ribosomal RNA (rRNA) genes. Binds specifically to the boxA antiterminator sequence of the ribosomal RNA (rrn) operons. This Klebsiella pneumoniae (strain 342) protein is Transcription antitermination protein NusB.